A 315-amino-acid polypeptide reads, in one-letter code: Aspartate carbamoyltransferase catalytic subunit (315 aa).

Residues Arg-55 and Thr-56 each contribute to the carbamoyl phosphate site. Lys-83 is an L-aspartate binding site. The carbamoyl phosphate site is built by Arg-105, His-138, and Gln-141. Residues Arg-171 and Arg-225 each coordinate L-aspartate. Gly-266 and Pro-267 together coordinate carbamoyl phosphate.

This sequence belongs to the aspartate/ornithine carbamoyltransferase superfamily. ATCase family. As to quaternary structure, heterododecamer (2C3:3R2) of six catalytic PyrB chains organized as two trimers (C3), and six regulatory PyrI chains organized as three dimers (R2).

The catalysed reaction is carbamoyl phosphate + L-aspartate = N-carbamoyl-L-aspartate + phosphate + H(+). It functions in the pathway pyrimidine metabolism; UMP biosynthesis via de novo pathway; (S)-dihydroorotate from bicarbonate: step 2/3. In terms of biological role, catalyzes the condensation of carbamoyl phosphate and aspartate to form carbamoyl aspartate and inorganic phosphate, the committed step in the de novo pyrimidine nucleotide biosynthesis pathway. The sequence is that of Aspartate carbamoyltransferase catalytic subunit from Mycolicibacterium vanbaalenii (strain DSM 7251 / JCM 13017 / BCRC 16820 / KCTC 9966 / NRRL B-24157 / PYR-1) (Mycobacterium vanbaalenii).